The sequence spans 697 residues: Methionine--tRNA ligase (697 aa).

Positions 12–22 (PYANGHFHIGH) match the 'HIGH' region motif. Zn(2+)-binding residues include Cys-143, Cys-146, Cys-156, and Cys-159. The short motif at 342–346 (KMSKS) is the 'KMSKS' region element. Lys-345 contributes to the ATP binding site. Positions 557–577 (FEPPAEPSPQTSPAAAGAGAV) are disordered. The tRNA-binding domain occupies 591–697 (DFTKIDLRLA…PGAVPGLRVR (107 aa)).

This sequence belongs to the class-I aminoacyl-tRNA synthetase family. MetG type 1 subfamily. As to quaternary structure, homodimer. It depends on Zn(2+) as a cofactor.

It localises to the cytoplasm. The catalysed reaction is tRNA(Met) + L-methionine + ATP = L-methionyl-tRNA(Met) + AMP + diphosphate. Is required not only for elongation of protein synthesis but also for the initiation of all mRNA translation through initiator tRNA(fMet) aminoacylation. This chain is Methionine--tRNA ligase, found in Methylibium petroleiphilum (strain ATCC BAA-1232 / LMG 22953 / PM1).